The following is a 485-amino-acid chain: Amino acid permease 1 (485 aa).

The segment covering 1–15 has biased composition (polar residues); sequence MKSFNTEGHNHSTAE. The tract at residues 1–35 is disordered; the sequence is MKSFNTEGHNHSTAESGDAYTVSDPTKNVDEDGRE. Residues 1 to 40 are Cytoplasmic-facing; that stretch reads MKSFNTEGHNHSTAESGDAYTVSDPTKNVDEDGREKRTGT. A run of 2 helical transmembrane segments spans residues 41-61 and 62-82; these read WLTA…LSLA and WAIA…FSFI. Over 83–129 the chain is Cytoplasmic; that stretch reads TYFTSTMLADCYRAPDPVTGKRNYTYMDVVRSYLGGRKVQLCGVAQY. The chain crosses the membrane as a helical span at residues 130–150; sequence GNLIGVTVGYTITASISLVAV. Residues 151 to 166 are Extracellular-facing; sequence GKSNCFHDKGHTADCT. The helical transmembrane segment at 167-187 threads the bilayer; that stretch reads ISNYPYMAVFGIIQVILSQIP. Residues 188–194 lie on the Cytoplasmic side of the membrane; sequence NFHKLSF. A helical membrane pass occupies residues 195-215; sequence LSIMAAVMSFTYATIGIGLAI. The Extracellular segment spans residues 216–245; the sequence is ATVAGGKVGKTSMTGTAVGVDVTAAQKIWR. The chain crosses the membrane as a helical span at residues 246 to 266; it reads SFQAVGDIAFAYAYATVLIEI. At 267–285 the chain is on the cytoplasmic side; the sequence is QDTLRSSPAENKAMKRASL. A helical transmembrane segment spans residues 286–306; sequence VGVSTTTFFYILCGCIGYAAF. The Extracellular portion of the chain corresponds to 307–318; the sequence is GNNAPGDFLTDF. A helical transmembrane segment spans residues 319-339; it reads GFFEPFWLIDFANACIAVHLI. The Cytoplasmic segment spans residues 340-394; that stretch reads GAYQVFAQPIFQFVEKKCNRNYPDNKFITSEYSVNVPFLGKFNISLFRLVWRTAY. A run of 2 helical transmembrane segments spans residues 395 to 415 and 416 to 436; these read VVIT…LGLI and GAAS…IAQT. Topologically, residues 437–450 are cytoplasmic; it reads KIKKYSARWIALKT. Residues 451–471 traverse the membrane as a helical segment; it reads MCYVCLIVSLLAAAGSIAGLI. Over 472–485 the chain is Extracellular; the sequence is SSVKTYKPFRTMHE.

Belongs to the amino acid/polyamine transporter 2 family. Amino acid/auxin permease (AAAP) (TC 2.A.18.2) subfamily. As to expression, highly expressed in developing pods. Found in the endosperm and in the storage parenchyma and the outer epidermis cells of the developing embryo. Lower levels of expression in flowers, in the vascular system of the cotyledon and in the root epidermal cells, including root hairs and throughout the root tip.

The protein localises to the cell membrane. Inhibited by carbonylcyanide m-chlorophenylhydrazone and diethylpyrocarbonate (DEPC). Functionally, amino acid-proton symporter. Stereospecific transporter with a broad specificity for histidine, glutamate and neutral amino acids. Reduced affinities for asparagine and valine. Involved in amino acid uptake from the apoplastic cavity into the embryo cells for storage protein accumulation and in root amino acid uptake. The protein is Amino acid permease 1 (AAP1) of Arabidopsis thaliana (Mouse-ear cress).